The following is a 445-amino-acid chain: Eukaryotic peptide chain release factor subunit 1 (445 aa).

Belongs to the eukaryotic release factor 1 family. Heterodimer of two subunits, one of which binds GTP.

The protein localises to the cytoplasm. Functionally, directs the termination of nascent peptide synthesis (translation) in response to the termination codon UGA. In Stylonchia UAA and UAG codes for glutamine. The protein is Eukaryotic peptide chain release factor subunit 1 (ERF1) of Stylonychia mytilus (Ciliate).